A 239-amino-acid chain; its full sequence is Large ribosomal subunit protein uL2 (239 aa).

Residues 203–239 form a disordered region; sequence PFGGKEHHPGKPTTTSRRAPPGRKVGHIAARRTGRRK. A compositionally biased stretch (basic residues) spans 222–239; that stretch reads PPGRKVGHIAARRTGRRK.

Belongs to the universal ribosomal protein uL2 family. As to quaternary structure, part of the 50S ribosomal subunit. Forms a bridge to the 30S subunit in the 70S ribosome.

One of the primary rRNA binding proteins. Required for association of the 30S and 50S subunits to form the 70S ribosome, for tRNA binding and peptide bond formation. It has been suggested to have peptidyltransferase activity; this is somewhat controversial. Makes several contacts with the 16S rRNA in the 70S ribosome. In Pyrococcus abyssi (strain GE5 / Orsay), this protein is Large ribosomal subunit protein uL2.